The sequence spans 718 residues: Tensin-4 (718 aa).

Residues 1 to 14 form the signal peptide; sequence MSSSLLTGGHVVSL. Disordered regions lie at residues 188–244 and 272–437; these read RETR…GLRA and LPHS…AKDM. Over residues 192-207 the composition is skewed to polar residues; sequence SSSNESLIFSGNQGRG. Low complexity predominate over residues 208–219; it reads SSPHTPSSLSNS. The residue at position 230 (S230) is a Phosphoserine. A compositionally biased stretch (low complexity) spans 272–304; that stretch reads LPHSSLSSYPPSSRSLGSPASSSSSLHSLDRGS. Polar residues-rich tracts occupy residues 306-316, 337-349, 367-393, and 405-415; these read CVRSSDAQVPS, QASS…TNSM, PAQQ…QATK, and TSPSHLCQATK. The region spanning 451 to 558 is the SH2 domain; that stretch reads WFKPSITREQ…ALPCKLTIPQ (108 aa). In terms of domain architecture, PTB spans 585–711; sequence CHTLYLTSVS…SQVISLVTAL (127 aa).

Belongs to the PTEN phosphatase protein family. Interacts (via SH2 domain) with Rho GTPase-activating protein DLC1 (via C-terminus); the interaction is independent of DLC1 tyrosine phosphorylation. Interacts with integrin ITGB1; the interaction displaces tensin TNS3 from the ITGB1 cytoplasmic tail and promotes ITGB1 stability. Interacts (via SH2 domain) with E3 ubiquitin-protein ligase CBL (phosphorylated on 'Tyr-781'); the interaction is enhanced in the presence of EGF and reduces interaction of CBL with EGFR. Interacts (via SH2 domain) with receptor tyrosine kinase MET (when phosphorylated); the interaction increases MET protein stability.

It localises to the cell junction. The protein localises to the focal adhesion. Its subcellular location is the cytoplasm. The protein resides in the cytoskeleton. In terms of biological role, promotes EGF-induced cell migration by displacing tensin TNS3 from the cytoplasmic tail of integrin ITGB1 which results in dissociation of TNS3 from focal adhesions, disassembly of actin stress fibers and initiation of cell migration. Suppresses ligand-induced degradation of EGFR by reducing EGFR ubiquitination in the presence of EGF. Increases MET protein stability by inhibiting MET endocytosis and subsequent lysosomal degradation which leads to increased cell survival, proliferation and migration. The chain is Tensin-4 (Tns4) from Rattus norvegicus (Rat).